A 239-amino-acid polypeptide reads, in one-letter code: Serine protease SplC (239 aa).

An N-terminal signal peptide occupies residues methionine 1 to alanine 36. Residues histidine 75, aspartate 113, and serine 193 each act as charge relay system in the active site.

The protein belongs to the peptidase S1B family.

The protein resides in the secreted. The protein is Serine protease SplC (splC) of Staphylococcus aureus (strain MSSA476).